A 425-amino-acid polypeptide reads, in one-letter code: Dihydroorotase (425 aa).

Positions 56 and 58 each coordinate Zn(2+). Substrate-binding positions include 58 to 60 (HYR) and N90. Zn(2+) contacts are provided by D148, H175, and H228. Substrate is bound at residue N274. Residue D301 participates in Zn(2+) binding. The active site involves D301. Substrate-binding positions include H305 and 319-320 (FG).

The protein belongs to the metallo-dependent hydrolases superfamily. DHOase family. Class I DHOase subfamily. The cofactor is Zn(2+).

The catalysed reaction is (S)-dihydroorotate + H2O = N-carbamoyl-L-aspartate + H(+). Its pathway is pyrimidine metabolism; UMP biosynthesis via de novo pathway; (S)-dihydroorotate from bicarbonate: step 3/3. Functionally, catalyzes the reversible cyclization of carbamoyl aspartate to dihydroorotate. In Lactobacillus acidophilus (strain ATCC 700396 / NCK56 / N2 / NCFM), this protein is Dihydroorotase.